Consider the following 117-residue polypeptide: NADH-ubiquinone oxidoreductase chain 3 (117 aa).

3 helical membrane passes run 4-24, 61-81, and 86-106; these read FLGI…LLGL, LVAI…PWAL, and IGYF…VGFI.

It belongs to the complex I subunit 3 family.

It is found in the mitochondrion membrane. It catalyses the reaction a ubiquinone + NADH + 5 H(+)(in) = a ubiquinol + NAD(+) + 4 H(+)(out). Functionally, core subunit of the mitochondrial membrane respiratory chain NADH dehydrogenase (Complex I) that is believed to belong to the minimal assembly required for catalysis. Complex I functions in the transfer of electrons from NADH to the respiratory chain. The immediate electron acceptor for the enzyme is believed to be ubiquinone. This chain is NADH-ubiquinone oxidoreductase chain 3 (NAD3), found in Prototheca wickerhamii.